The chain runs to 233 residues: Orotidine 5'-phosphate decarboxylase (233 aa).

Substrate-binding positions include D10, K32, 59–68 (DLKFHDIPNT), T119, R180, Q189, G209, and R210. K61 functions as the Proton donor in the catalytic mechanism.

It belongs to the OMP decarboxylase family. Type 1 subfamily. As to quaternary structure, homodimer.

It catalyses the reaction orotidine 5'-phosphate + H(+) = UMP + CO2. Its pathway is pyrimidine metabolism; UMP biosynthesis via de novo pathway; UMP from orotate: step 2/2. Catalyzes the decarboxylation of orotidine 5'-monophosphate (OMP) to uridine 5'-monophosphate (UMP). This chain is Orotidine 5'-phosphate decarboxylase, found in Pasteurella multocida (strain Pm70).